Here is a 366-residue protein sequence, read N- to C-terminus: A-type ATP synthase subunit C (366 aa).

Belongs to the V-ATPase V0D/AC39 subunit family. As to quaternary structure, has multiple subunits with at least A(3), B(3), C, D, E, F, H, I and proteolipid K(x).

The protein resides in the cell membrane. Its function is as follows. Component of the A-type ATP synthase that produces ATP from ADP in the presence of a proton gradient across the membrane. The polypeptide is A-type ATP synthase subunit C (Thermococcus onnurineus (strain NA1)).